The following is a 319-amino-acid chain: Beta-ketoacyl-[acyl-carrier-protein] synthase III (319 aa).

Catalysis depends on residues Cys-113 and His-246. Residues 247-251 form an ACP-binding region; it reads QANIR. Asn-276 is a catalytic residue.

It belongs to the thiolase-like superfamily. FabH family. In terms of assembly, homodimer.

Its subcellular location is the cytoplasm. It carries out the reaction malonyl-[ACP] + acetyl-CoA + H(+) = 3-oxobutanoyl-[ACP] + CO2 + CoA. Its pathway is lipid metabolism; fatty acid biosynthesis. Functionally, catalyzes the condensation reaction of fatty acid synthesis by the addition to an acyl acceptor of two carbons from malonyl-ACP. Catalyzes the first condensation reaction which initiates fatty acid synthesis and may therefore play a role in governing the total rate of fatty acid production. Possesses both acetoacetyl-ACP synthase and acetyl transacylase activities. Its substrate specificity determines the biosynthesis of branched-chain and/or straight-chain of fatty acids. The polypeptide is Beta-ketoacyl-[acyl-carrier-protein] synthase III (Ehrlichia ruminantium (strain Gardel)).